A 389-amino-acid chain; its full sequence is RHOMBOID-like protein 1 (389 aa).

A run of 7 helical transmembrane segments spans residues 56-76 (PWLV…SMFI), 136-156 (IWLH…IFIG), 163-183 (FGFV…SLLS), 191-211 (ISVG…SELL), 221-241 (FAAL…GILP), 244-264 (DNFA…VFLI), and 295-315 (VLWI…LVVL). The active-site Nucleophile is Ser196. His248 acts as the Charge relay system in catalysis.

The protein belongs to the peptidase S54 family. In terms of tissue distribution, expressed in roots, seedlings, leaves, stems and flowers.

The protein localises to the golgi apparatus membrane. The catalysed reaction is Cleaves type-1 transmembrane domains using a catalytic dyad composed of serine and histidine that are contributed by different transmembrane domains.. Functionally, probable rhomboid-type serine protease that catalyzes intramembrane proteolysis. Unable to cleave the Drosophila protein Spitz. The polypeptide is RHOMBOID-like protein 1 (Arabidopsis thaliana (Mouse-ear cress)).